A 492-amino-acid chain; its full sequence is Protein nucleotidyltransferase YdiU (492 aa).

The ATP site is built by G88, G90, R91, K111, D123, G124, R174, and R181. D250 serves as the catalytic Proton acceptor. N251 and D260 together coordinate Mg(2+). Residue D260 participates in ATP binding.

This sequence belongs to the SELO family. Requires Mg(2+) as cofactor. Mn(2+) is required as a cofactor.

The enzyme catalyses L-seryl-[protein] + ATP = 3-O-(5'-adenylyl)-L-seryl-[protein] + diphosphate. It catalyses the reaction L-threonyl-[protein] + ATP = 3-O-(5'-adenylyl)-L-threonyl-[protein] + diphosphate. The catalysed reaction is L-tyrosyl-[protein] + ATP = O-(5'-adenylyl)-L-tyrosyl-[protein] + diphosphate. It carries out the reaction L-histidyl-[protein] + UTP = N(tele)-(5'-uridylyl)-L-histidyl-[protein] + diphosphate. The enzyme catalyses L-seryl-[protein] + UTP = O-(5'-uridylyl)-L-seryl-[protein] + diphosphate. It catalyses the reaction L-tyrosyl-[protein] + UTP = O-(5'-uridylyl)-L-tyrosyl-[protein] + diphosphate. Nucleotidyltransferase involved in the post-translational modification of proteins. It can catalyze the addition of adenosine monophosphate (AMP) or uridine monophosphate (UMP) to a protein, resulting in modifications known as AMPylation and UMPylation. The polypeptide is Protein nucleotidyltransferase YdiU (Rhodopseudomonas palustris (strain BisB5)).